The sequence spans 117 residues: Large ribosomal subunit protein uL18 (117 aa).

This sequence belongs to the universal ribosomal protein uL18 family. In terms of assembly, part of the 50S ribosomal subunit; part of the 5S rRNA/L5/L18/L25 subcomplex. Contacts the 5S and 23S rRNAs.

Its function is as follows. This is one of the proteins that bind and probably mediate the attachment of the 5S RNA into the large ribosomal subunit, where it forms part of the central protuberance. The chain is Large ribosomal subunit protein uL18 from Vibrio cholerae serotype O1 (strain ATCC 39541 / Classical Ogawa 395 / O395).